The following is a 103-amino-acid chain: Putative double-stranded DNA mimic protein APJL_1366 (103 aa).

It belongs to the putative dsDNA mimic protein family.

In terms of biological role, may act as a double-stranded DNA (dsDNA) mimic. Probably regulates the activity of a dsDNA-binding protein. The chain is Putative double-stranded DNA mimic protein APJL_1366 from Actinobacillus pleuropneumoniae serotype 3 (strain JL03).